We begin with the raw amino-acid sequence, 245 residues long: 3-deoxy-manno-octulosonate cytidylyltransferase (245 aa).

It belongs to the KdsB family.

The protein resides in the cytoplasm. It catalyses the reaction 3-deoxy-alpha-D-manno-oct-2-ulosonate + CTP = CMP-3-deoxy-beta-D-manno-octulosonate + diphosphate. Its pathway is nucleotide-sugar biosynthesis; CMP-3-deoxy-D-manno-octulosonate biosynthesis; CMP-3-deoxy-D-manno-octulosonate from 3-deoxy-D-manno-octulosonate and CTP: step 1/1. The protein operates within bacterial outer membrane biogenesis; lipopolysaccharide biosynthesis. In terms of biological role, activates KDO (a required 8-carbon sugar) for incorporation into bacterial lipopolysaccharide in Gram-negative bacteria. The polypeptide is 3-deoxy-manno-octulosonate cytidylyltransferase (Acaryochloris marina (strain MBIC 11017)).